The following is a 3411-amino-acid chain: Genome polyprotein (3411 aa).

Over 1 to 104 the chain is Cytoplasmic; that stretch reads MSGRKAQGKT…LSSRKRRSHD (104 aa). The propeptide at 102-121 is ER anchor for the capsid protein C, removed in mature form by serine protease NS3; sequence SHDALAVQFLILGMLLMAGG. A helical transmembrane segment spans residues 105 to 125; that stretch reads ALAVQFLILGMLLMAGGVTLV. Over 126 to 244 the chain is Extracellular; that stretch reads RKNRWLLLNV…GERQLQKIER (119 aa). 2 N-linked (GlcNAc...) asparagine; by host glycosylation sites follow: Asn134 and Asn150. A helical transmembrane segment spans residues 245 to 265; that stretch reads WLVRNPFFAVTALTIAYLVGS. The Cytoplasmic portion of the chain corresponds to 266–270; that stretch reads NMTQR. A helical transmembrane segment spans residues 271-285; the sequence is VVIALLVLAVGPAYS. Residues 286–730 are Extracellular-facing; it reads AHCIGITDRD…TVFGSAFQGL (445 aa). 8 cysteine pairs are disulfide-bonded: Cys288/Cys315, Cys345/Cys401, Cys345/Cys406, Cys359/Cys390, Cys377/Cys401, Cys377/Cys406, Cys467/Cys568, and Cys585/Cys615. A fusion peptide region spans residues 383 to 396; that stretch reads DRGWGNGCGLFGKG. The chain crosses the membrane as a helical span at residues 731–751; the sequence is FGGLSWITKVIMGAVLIWVGI. Topologically, residues 752–757 are extracellular; it reads NTRNMT. A helical transmembrane segment spans residues 758-778; the sequence is MSMSMILVGVIMMFLSLGVGA. The Extracellular portion of the chain corresponds to 779–1132; the sequence is DQGCAINFGK…LVRSWVTAGE (354 aa). Intrachain disulfides connect Cys782–Cys793, Cys833–Cys921, Cys957–Cys1002, Cys1058–Cys1107, Cys1069–Cys1091, and Cys1090–Cys1094. Asn908 and Asn986 each carry an N-linked (GlcNAc...) asparagine; by host glycan. A helical transmembrane segment spans residues 1133–1153; that stretch reads IHAVPFGLVSMMIAMEVVLRK. Over 1154–1201 the chain is Cytoplasmic; it reads RQGPKQMLVGGVVLLGAMLVGQVTLLDLLKLTVAVGLHFHEMNNGGDA. A helical transmembrane segment spans residues 1202 to 1222; it reads MYMALIAAFSIRPGLLIGFGL. Residues 1223 to 1287 lie on the Lumenal side of the membrane; it reads RTLWSPRERL…ILPLMALLTP (65 aa). Residues 1288-1308 traverse the membrane as a helical segment; sequence VTMAEVRLAAMLFCTVVIIGV. At 1309–1355 the chain is on the cytoplasmic side; the sequence is LHQNSKDTSMQKTIPLVALTLTSYLGLTQPFLGLCAFLATRLFGRRS. Residues 1356–1376 form a helical membrane-spanning segment; the sequence is IPVNEALAAAGLVGVLAGLAF. Residues 1377–1378 lie on the Lumenal side of the membrane; sequence QE. Residues 1379–1399 form a helical membrane-spanning segment; the sequence is MENFLGPIAVGGILMMLVSVA. Topologically, residues 1400-1456 are cytoplasmic; sequence GRVDGLELRKLGEVSWEEEAEISGSSARYDVALSEQGEFKLLSEEKVPWDQVVMTSL. Positions 1407-1446 are interacts with and activates NS3 protease; it reads LRKLGEVSWEEEAEISGSSARYDVALSEQGEFKLLSEEKV. The helical intramembrane region spans 1457 to 1477; that stretch reads ALVGAAIHPFALLLVLAGWLF. Residues 1478–2157 are Cytoplasmic-facing; the sequence is HVKGARRSGD…RNALSMMPEA (680 aa). In terms of domain architecture, Peptidase S7 spans 1485–1665; sequence SGDVLWDIPT…EVKEEGKEEL (181 aa). Active-site charge relay system; for serine protease NS3 activity residues include His1537, Asp1561, and Ser1622. The region spanning 1669–1825 is the Helicase ATP-binding domain; the sequence is PTMLKKGMTT…HSNGEIEDVQ (157 aa). The segment at 1673–1676 is important for RNA-binding; the sequence is KKGM. 1682 to 1689 contacts ATP; sequence FHPGAGKT. The DEAH box signature appears at 1773–1776; the sequence is DEAH. Residues 1820 to 1997 enclose the Helicase C-terminal domain; sequence EIEDVQTDIP…VRGGMVAPLY (178 aa). At Lys1877 the chain carries N6-acetyllysine; by host. The tract at residues 1942 to 1961 is disordered; sequence AAQRRGRIGRNPNRDGDSYY. Residues 2158–2178 traverse the membrane as a helical segment; that stretch reads MTIAMLFILAGLLTSGMVIFF. At 2179–2186 the chain is on the lumenal side; that stretch reads MSPKGISR. The helical intramembrane region spans 2187 to 2207; that stretch reads MSMAMGTMAGCGYLMFLGGVK. Residues 2208–2209 are Lumenal-facing; that stretch reads PT. The helical transmembrane segment at 2210 to 2230 threads the bilayer; that stretch reads HISYIMLIFFVLMVVVIPEPG. The Cytoplasmic portion of the chain corresponds to 2231 to 2241; sequence QQRSIQDNQVA. A helical membrane pass occupies residues 2242–2262; the sequence is YLIIGILTLVSVVAANELGML. The Lumenal segment spans residues 2263–2293; that stretch reads EKTKEDLFGKKDLIPSSASPWSWPDLDLKPG. An intramembrane region (helical) is located at residues 2294 to 2314; that stretch reads AAWTVYVGIVTMLSPMLHHWI. Topologically, residues 2315–2360 are lumenal; the sequence is KVEYGNLSLSGIAQSASVLSFMDKGIPFMKMNISVIILLVSGWNSI. A helical membrane pass occupies residues 2361–2380; that stretch reads TVMPLLCGIGCAMLHWSLIL. Topologically, residues 2381-2421 are cytoplasmic; the sequence is PGIKAQQSKLAQRRVFHGVAKNPVVDGNPTVDIEEAPEMPA. Residues 2422–2442 form a helical membrane-spanning segment; the sequence is LYEKKLALYLLLALSLASVAM. Residues 2443–2445 are Lumenal-facing; sequence CRT. The helical transmembrane segment at 2446 to 2466 threads the bilayer; sequence PFSLAEGIVLASAALGPLIEG. Over 2467–3411 the chain is Cytoplasmic; that stretch reads NTSLLWNGPM…DADLQPGELI (945 aa). An mRNA cap 0-1 NS5-type MT domain is found at 2507–2771; that stretch reads GRANGKTLGE…DVILPIGTRS (265 aa). Residue Ser2562 coordinates S-adenosyl-L-methionine. Phosphoserine is present on Ser2562. Lys2567 serves as the catalytic For 2'-O-MTase activity. Residues Gly2592, Trp2593, Thr2610, Leu2611, Asp2637, and Ile2638 each contribute to the S-adenosyl-L-methionine site. Asp2652 (for 2'-O-MTase activity) is an active-site residue. Residue Ile2653 coordinates S-adenosyl-L-methionine. Active-site for 2'-O-MTase activity residues include Lys2688 and Glu2724. An S-adenosyl-L-methionine-binding site is contributed by Tyr2726. The short motif at 2878–2911 is the Nuclear localization signal element; it reads RKIMKVVNRWLFRHLAREKNPRLCTKEEFIAKVR. Residues Glu2945, His2949, Cys2954, and Cys2957 each coordinate Zn(2+). Positions 3035-3187 constitute a RdRp catalytic domain; it reads GGFYADDTAG…RPIDDRFGLA (153 aa). The Zn(2+) site is built by His3222, Cys3238, and Cys3357.

It in the N-terminal section; belongs to the class I-like SAM-binding methyltransferase superfamily. mRNA cap 0-1 NS5-type methyltransferase family. As to quaternary structure, homodimer. Interacts (via N-terminus) with host EXOC1 (via C-terminus); this interaction results in EXOC1 degradation through the proteasome degradation pathway. Forms heterodimers with envelope protein E in the endoplasmic reticulum and Golgi. In terms of assembly, homodimer; in the endoplasmic reticulum and Golgi. Interacts with protein prM. Interacts with non-structural protein 1. As to quaternary structure, homodimer; Homohexamer when secreted. Interacts with envelope protein E. Interacts (via N-terminus) with serine protease NS3. In terms of assembly, forms a heterodimer with serine protease NS3. May form homooligomers. As to quaternary structure, forms a heterodimer with NS2B. Interacts with non-structural protein 2A (via N-terminus). Interacts with NS4B. Interacts with unphosphorylated RNA-directed RNA polymerase NS5; this interaction stimulates RNA-directed RNA polymerase NS5 guanylyltransferase activity. NS3 interacts with host PDCD6IP; this interaction contributes to virion release. Interacts with serine protease NS3. In terms of assembly, homodimer. Interacts with host STAT2; this interaction prevents the establishment of cellular antiviral state. Interacts with serine protease NS3. Interacts with host TRIM23; this interaction leads to NS5 ubiquitination. Post-translationally, specific enzymatic cleavages in vivo yield mature proteins. The nascent capsid protein C contains a C-terminal hydrophobic domain that act as a signal sequence for translocation of prM into the lumen of the ER. Mature capsid protein C is cleaved at a site upstream of this hydrophobic domain by NS3. prM is cleaved in post-Golgi vesicles by a host furin, releasing the mature small envelope protein M, and peptide pr. Non-structural protein 2A-alpha, a C-terminally truncated form of non-structural protein 2A, results from partial cleavage by NS3. Specific enzymatic cleavages in vivo yield mature proteins peptide 2K acts as a signal sequence and is removed from the N-terminus of NS4B by the host signal peptidase in the ER lumen. Signal cleavage at the 2K-4B site requires a prior NS3 protease-mediated cleavage at the 4A-2K site. In terms of processing, cleaved in post-Golgi vesicles by a host furin, releasing the mature small envelope protein M, and peptide pr. This cleavage is incomplete as up to 30% of viral particles still carry uncleaved prM. N-glycosylated. Post-translationally, N-glycosylated. The excreted form is glycosylated and this is required for efficient secretion of the protein from infected cells. In terms of processing, polyubiquitinated; ubiquitination is probably mediated by host TRIM23 and is prerequisite for NS5-STAT2 interaction. NS5 is not ISGylated or sumoylated. Acetylated by host KAT5. Acetylation modulates NS3 RNA-binding and unwinding activities and plays an important positive role for viral replication. Post-translationally, phosphorylated on serines residues. This phosphorylation may trigger NS5 nuclear localization.

It is found in the virion. Its subcellular location is the host nucleus. The protein resides in the host cytoplasm. It localises to the host perinuclear region. The protein localises to the secreted. It is found in the virion membrane. Its subcellular location is the host endoplasmic reticulum membrane. It carries out the reaction Selective hydrolysis of -Xaa-Xaa-|-Yaa- bonds in which each of the Xaa can be either Arg or Lys and Yaa can be either Ser or Ala.. The catalysed reaction is RNA(n) + a ribonucleoside 5'-triphosphate = RNA(n+1) + diphosphate. It catalyses the reaction a ribonucleoside 5'-triphosphate + H2O = a ribonucleoside 5'-diphosphate + phosphate + H(+). The enzyme catalyses ATP + H2O = ADP + phosphate + H(+). It carries out the reaction a 5'-end (5'-triphosphoguanosine)-ribonucleoside in mRNA + S-adenosyl-L-methionine = a 5'-end (N(7)-methyl 5'-triphosphoguanosine)-ribonucleoside in mRNA + S-adenosyl-L-homocysteine. The catalysed reaction is a 5'-end (N(7)-methyl 5'-triphosphoguanosine)-ribonucleoside in mRNA + S-adenosyl-L-methionine = a 5'-end (N(7)-methyl 5'-triphosphoguanosine)-(2'-O-methyl-ribonucleoside) in mRNA + S-adenosyl-L-homocysteine + H(+). In terms of biological role, plays a role in virus budding by binding to the cell membrane and gathering the viral RNA into a nucleocapsid that forms the core of a mature virus particle. During virus entry, may induce genome penetration into the host cytoplasm after hemifusion induced by the surface proteins. Can migrate to the cell nucleus where it modulates host functions. Inhibits RNA silencing by interfering with host Dicer. Its function is as follows. Prevents premature fusion activity of envelope proteins in trans-Golgi by binding to envelope protein E at pH6.0. After virion release in extracellular space, gets dissociated from E dimers. Functionally, acts as a chaperone for envelope protein E during intracellular virion assembly by masking and inactivating envelope protein E fusion peptide. prM is the only viral peptide matured by host furin in the trans-Golgi network probably to avoid catastrophic activation of the viral fusion activity in acidic Golgi compartment prior to virion release. prM-E cleavage is inefficient, and many virions are only partially matured. These uncleaved prM would play a role in immune evasion. In terms of biological role, may play a role in virus budding. Exerts cytotoxic effects by activating a mitochondrial apoptotic pathway through M ectodomain. May display a viroporin activity. Binds to host cell surface receptor and mediates fusion between viral and cellular membranes. Envelope protein is synthesized in the endoplasmic reticulum in the form of heterodimer with protein prM. They play a role in virion budding in the ER, and the newly formed immature particle is covered with 60 spikes composed of heterodimer between precursor prM and envelope protein E. The virion is transported to the Golgi apparatus where the low pH causes dissociation of PrM-E heterodimers and formation of E homodimers. prM-E cleavage is inefficient, and many virions are only partially matured. These uncleaved prM would play a role in immune evasion. Its function is as follows. Involved in immune evasion, pathogenesis and viral replication. Once cleaved off the polyprotein, is targeted to three destinations: the viral replication cycle, the plasma membrane and the extracellular compartment. Essential for viral replication. Required for formation of the replication complex and recruitment of other non-structural proteins to the ER-derived membrane structures. Excreted as a hexameric lipoparticle that plays a role against host immune response. Antagonizing the complement function. Binds to the host macrophages and dendritic cells. Inhibits signal transduction originating from Toll-like receptor 3 (TLR3). Functionally, component of the viral RNA replication complex that functions in virion assembly and antagonizes the host immune response. In terms of biological role, required cofactor for the serine protease function of NS3. May have membrane-destabilizing activity and form viroporins. Displays three enzymatic activities: serine protease, NTPase and RNA helicase. NS3 serine protease, in association with NS2B, performs its autocleavage and cleaves the polyprotein at dibasic sites in the cytoplasm: C-prM, NS2A-NS2B, NS2B-NS3, NS3-NS4A, NS4A-2K and NS4B-NS5. NS3 RNA helicase binds RNA and unwinds dsRNA in the 3' to 5' direction. Also plays a role in virus assembly. Its function is as follows. Regulates the ATPase activity of the NS3 helicase activity. NS4A allows NS3 helicase to conserve energy during unwinding. Functionally, functions as a signal peptide for NS4B and is required for the interferon antagonism activity of the latter. In terms of biological role, induces the formation of ER-derived membrane vesicles where the viral replication takes place. Inhibits interferon (IFN)-induced host STAT1 phosphorylation and nuclear translocation, thereby preventing the establishment of cellular antiviral state by blocking the IFN-alpha/beta pathway. Replicates the viral (+) and (-) RNA genome, and performs the capping of genomes in the cytoplasm. NS5 methylates viral RNA cap at guanine N-7 and ribose 2'-O positions. Besides its role in RNA genome replication, also prevents the establishment of cellular antiviral state by blocking the interferon-alpha/beta (IFN-alpha/beta) signaling pathway. IFN-I induces binding of NS5 to host IFN-activated transcription factor STAT2, preventing its transcriptional activity. Host TRIM23 is the E3 ligase that interacts with and polyubiquitinates NS5 to promote its binding to STAT2 and trigger IFN-I signaling inhibition. This is Genome polyprotein from Yellow fever virus (isolate Ivory Coast/1999) (YFV).